The following is a 168-amino-acid chain: CS3 fimbrial subunit A (168 aa).

A signal peptide spans 1–22 (MLKIKYLLIGLSLSAMSSYSLA).

Post-translationally, a longer minor form, starting at amino acid 15, has been detected by amino acid sequencing. This is probably due to alternative processing of the signal peptide.

Its subcellular location is the fimbrium. Functionally, fimbriae (also called pili), polar filaments radiating from the surface of the bacterium to a length of 0.5-1.5 micrometers and numbering 100-300 per cell, enable bacteria to colonize the epithelium of specific host organs. The protein is CS3 fimbrial subunit A of Escherichia coli.